Reading from the N-terminus, the 144-residue chain is Putative pre-16S rRNA nuclease (144 aa).

Belongs to the YqgF nuclease family.

The protein resides in the cytoplasm. Its function is as follows. Could be a nuclease involved in processing of the 5'-end of pre-16S rRNA. The protein is Putative pre-16S rRNA nuclease of Oleidesulfovibrio alaskensis (strain ATCC BAA-1058 / DSM 17464 / G20) (Desulfovibrio alaskensis).